Consider the following 396-residue polypeptide: Jacalin-related lectin 45 (396 aa).

3 consecutive Jacalin-type lectin domains span residues 3-138, 144-264, and 270-392; these read KKVT…KTSH, QFRM…NFAV, and VKKL…YVKP.

Belongs to the jacalin lectin family.

This is Jacalin-related lectin 45 (JAL45) from Arabidopsis thaliana (Mouse-ear cress).